The chain runs to 412 residues: Putative competence-damage inducible protein (412 aa).

The protein belongs to the CinA family.

This Caldanaerobacter subterraneus subsp. tengcongensis (strain DSM 15242 / JCM 11007 / NBRC 100824 / MB4) (Thermoanaerobacter tengcongensis) protein is Putative competence-damage inducible protein.